Reading from the N-terminus, the 130-residue chain is Small ribosomal subunit protein uS11 (130 aa).

Belongs to the universal ribosomal protein uS11 family. In terms of assembly, part of the 30S ribosomal subunit. Interacts with proteins S7 and S18. Binds to IF-3.

Located on the platform of the 30S subunit, it bridges several disparate RNA helices of the 16S rRNA. Forms part of the Shine-Dalgarno cleft in the 70S ribosome. The sequence is that of Small ribosomal subunit protein uS11 from Syntrophomonas wolfei subsp. wolfei (strain DSM 2245B / Goettingen).